Here is a 239-residue protein sequence, read N- to C-terminus: Ribonuclease PH (239 aa).

Residues arginine 87 and 125 to 127 each bind phosphate; that span reads GTR.

This sequence belongs to the RNase PH family. As to quaternary structure, homohexameric ring arranged as a trimer of dimers.

The catalysed reaction is tRNA(n+1) + phosphate = tRNA(n) + a ribonucleoside 5'-diphosphate. In terms of biological role, phosphorolytic 3'-5' exoribonuclease that plays an important role in tRNA 3'-end maturation. Removes nucleotide residues following the 3'-CCA terminus of tRNAs; can also add nucleotides to the ends of RNA molecules by using nucleoside diphosphates as substrates, but this may not be physiologically important. Probably plays a role in initiation of 16S rRNA degradation (leading to ribosome degradation) during starvation. The protein is Ribonuclease PH of Azotobacter vinelandii (strain DJ / ATCC BAA-1303).